Consider the following 283-residue polypeptide: Pantothenate synthetase (283 aa).

30 to 37 (MGNLHDGH) serves as a coordination point for ATP. The active-site Proton donor is the His37. Gln61 is a binding site for (R)-pantoate. Residue Gln61 participates in beta-alanine binding. Residue 149–152 (GEKD) participates in ATP binding. Gln155 provides a ligand contact to (R)-pantoate. 186–189 (LSSR) contributes to the ATP binding site.

It belongs to the pantothenate synthetase family. In terms of assembly, homodimer.

It is found in the cytoplasm. It carries out the reaction (R)-pantoate + beta-alanine + ATP = (R)-pantothenate + AMP + diphosphate + H(+). It participates in cofactor biosynthesis; (R)-pantothenate biosynthesis; (R)-pantothenate from (R)-pantoate and beta-alanine: step 1/1. Functionally, catalyzes the condensation of pantoate with beta-alanine in an ATP-dependent reaction via a pantoyl-adenylate intermediate. The protein is Pantothenate synthetase of Escherichia fergusonii (strain ATCC 35469 / DSM 13698 / CCUG 18766 / IAM 14443 / JCM 21226 / LMG 7866 / NBRC 102419 / NCTC 12128 / CDC 0568-73).